The chain runs to 476 residues: Aspartyl/glutamyl-tRNA(Asn/Gln) amidotransferase subunit B (476 aa).

The protein belongs to the GatB/GatE family. GatB subfamily. As to quaternary structure, heterotrimer of A, B and C subunits.

The catalysed reaction is L-glutamyl-tRNA(Gln) + L-glutamine + ATP + H2O = L-glutaminyl-tRNA(Gln) + L-glutamate + ADP + phosphate + H(+). The enzyme catalyses L-aspartyl-tRNA(Asn) + L-glutamine + ATP + H2O = L-asparaginyl-tRNA(Asn) + L-glutamate + ADP + phosphate + 2 H(+). Its function is as follows. Allows the formation of correctly charged Asn-tRNA(Asn) or Gln-tRNA(Gln) through the transamidation of misacylated Asp-tRNA(Asn) or Glu-tRNA(Gln) in organisms which lack either or both of asparaginyl-tRNA or glutaminyl-tRNA synthetases. The reaction takes place in the presence of glutamine and ATP through an activated phospho-Asp-tRNA(Asn) or phospho-Glu-tRNA(Gln). The protein is Aspartyl/glutamyl-tRNA(Asn/Gln) amidotransferase subunit B of Clostridium botulinum (strain Kyoto / Type A2).